A 226-amino-acid chain; its full sequence is Gap junction beta-2 protein (226 aa).

An intramembrane segment occupies 2–13; that stretch reads DWSALQTILGGV. The Cytoplasmic portion of the chain corresponds to 14–20; that stretch reads NKHSTSI. Residues 21–40 form a helical membrane-spanning segment; sequence GKIWLTVLFIFRIMILVVAA. At 41-73 the chain is on the extracellular side; that stretch reads KEVWGDEQADFVCNTLQPGCKNVCYDHYFPISH. Ca(2+)-binding residues include E42, G45, and E47. Cystine bridges form between C53–C180, C60–C174, and C64–C169. Residues 74-94 form a helical membrane-spanning segment; that stretch reads IRLWALQLIFVSTPALLVAMH. The Cytoplasmic segment spans residues 95–135; it reads VAYYRHEKKRKFIRGEIKTEFKDIEEIKNQKVRIEGSLWWT. The chain crosses the membrane as a helical span at residues 136 to 156; sequence YTGSIFFRVIFEAAFMYVFYV. Residues 157-189 are Extracellular-facing; it reads MYDGFAMQRLVKCNAWPCPNTVDCFVSRPTEKT. A helical transmembrane segment spans residues 190-210; it reads VFTVFMIAVSGICILLNVTEL. The Cytoplasmic portion of the chain corresponds to 211–226; that stretch reads CYLLIRFCSGKSKKPV.

The protein belongs to the connexin family. Beta-type (group I) subfamily. A hemichannel or connexon is composed of a hexamer of connexins. A functional gap junction is formed by the apposition of two hemichannels. Forms heteromeric channels with GJB4. Interacts with CNST.

It is found in the cell membrane. The protein resides in the cell junction. It localises to the gap junction. In terms of biological role, structural component of gap junctions. Gap junctions are dodecameric channels that connect the cytoplasm of adjoining cells. They are formed by the docking of two hexameric hemichannels, one from each cell membrane. Small molecules and ions diffuse from one cell to a neighboring cell via the central pore. This Ovis aries (Sheep) protein is Gap junction beta-2 protein (GJB2).